The sequence spans 422 residues: UDP-N-acetylglucosamine 1-carboxyvinyltransferase (422 aa).

22–23 lines the phosphoenolpyruvate pocket; the sequence is KN. UDP-N-acetyl-alpha-D-glucosamine is bound at residue Arg93. The active-site Proton donor is the Cys117. Residue Cys117 is modified to 2-(S-cysteinyl)pyruvic acid O-phosphothioketal. UDP-N-acetyl-alpha-D-glucosamine contacts are provided by residues 122 to 126, Asp305, and Ile327; that span reads RPVDQ.

It belongs to the EPSP synthase family. MurA subfamily.

It localises to the cytoplasm. It catalyses the reaction phosphoenolpyruvate + UDP-N-acetyl-alpha-D-glucosamine = UDP-N-acetyl-3-O-(1-carboxyvinyl)-alpha-D-glucosamine + phosphate. It functions in the pathway cell wall biogenesis; peptidoglycan biosynthesis. In terms of biological role, cell wall formation. Adds enolpyruvyl to UDP-N-acetylglucosamine. This Bordetella bronchiseptica (strain ATCC BAA-588 / NCTC 13252 / RB50) (Alcaligenes bronchisepticus) protein is UDP-N-acetylglucosamine 1-carboxyvinyltransferase.